Reading from the N-terminus, the 443-residue chain is D-alanyl-D-alanine carboxypeptidase DacA (443 aa).

A signal peptide spans 1 to 31; it reads MNIKKCKQLLMSLVVLTLAVTCLAPMSKAKA. Serine 67 (acyl-ester intermediate) is an active-site residue. The active-site Proton acceptor is lysine 70. Serine 131 is an active-site residue. Substrate is bound at residue lysine 258.

This sequence belongs to the peptidase S11 family.

It localises to the secreted. The protein localises to the cell wall. It is found in the cell membrane. The protein resides in the membrane raft. It carries out the reaction Preferential cleavage: (Ac)2-L-Lys-D-Ala-|-D-Ala. Also transpeptidation of peptidyl-alanyl moieties that are N-acyl substituents of D-alanine.. It functions in the pathway cell wall biogenesis; peptidoglycan biosynthesis. Its function is as follows. Removes C-terminal D-alanyl residues from sugar-peptide cell wall precursors. This chain is D-alanyl-D-alanine carboxypeptidase DacA (dacA), found in Bacillus subtilis (strain 168).